Reading from the N-terminus, the 363-residue chain is tRNA(Met) cytidine acetate ligase (363 aa).

Residues 7–20 (IAEF…HKYL), Gly-96, Asn-152, and Arg-175 contribute to the ATP site.

It belongs to the TmcAL family.

It is found in the cytoplasm. The catalysed reaction is cytidine(34) in elongator tRNA(Met) + acetate + ATP = N(4)-acetylcytidine(34) in elongator tRNA(Met) + AMP + diphosphate. Catalyzes the formation of N(4)-acetylcytidine (ac(4)C) at the wobble position of elongator tRNA(Met), using acetate and ATP as substrates. First activates an acetate ion to form acetyladenylate (Ac-AMP) and then transfers the acetyl group to tRNA to form ac(4)C34. The chain is tRNA(Met) cytidine acetate ligase from Streptococcus thermophilus (strain CNRZ 1066).